Consider the following 1082-residue polypeptide: Protein SPT23 (1082 aa).

Disordered regions lie at residues 315–346 (NASN…PQSD), 376–417 (NNNN…FSDI), and 457–476 (ASAR…FMST). The segment covering 316–328 (ASNTTTPTSTSNA) has biased composition (low complexity). Over residues 329–346 (QVSPMTNDTRSFSSPQSD) the composition is skewed to polar residues. Low complexity-rich tracts occupy residues 376–391 (NNNN…KTNT) and 399–416 (HFPS…SFSD). The residue at position 468 (Ser468) is a Phosphoserine. Residues 508–585 (PSIQRVIPAQ…DPSETSMRNN (78 aa)) enclose the IPT/TIG domain. ANK repeat units lie at residues 709-738 (RGRT…HLND) and 742-771 (FGFT…NIMK).

Functionally, dosage-dependent suppressor of Ty-induced promoter mutations. May exert its suppression effect through protein-protein interactions since does not present any of the motifs generally found in transcriptional activators or DNA binding proteins. The protein is Protein SPT23 (SPT23) of Saccharomyces cerevisiae (strain ATCC 204508 / S288c) (Baker's yeast).